Here is a 150-residue protein sequence, read N- to C-terminus: 6,7-dimethyl-8-ribityllumazine synthase (150 aa).

Residues F11, 42 to 44, and 73 to 75 each bind 5-amino-6-(D-ribitylamino)uracil; these read IFE and CAI. Position 78-79 (78-79) interacts with (2S)-2-hydroxy-3-oxobutyl phosphate; the sequence is ES. The active-site Proton donor is H81. 5-amino-6-(D-ribitylamino)uracil is bound at residue N106. R120 is a (2S)-2-hydroxy-3-oxobutyl phosphate binding site.

It belongs to the DMRL synthase family.

It carries out the reaction (2S)-2-hydroxy-3-oxobutyl phosphate + 5-amino-6-(D-ribitylamino)uracil = 6,7-dimethyl-8-(1-D-ribityl)lumazine + phosphate + 2 H2O + H(+). Its pathway is cofactor biosynthesis; riboflavin biosynthesis; riboflavin from 2-hydroxy-3-oxobutyl phosphate and 5-amino-6-(D-ribitylamino)uracil: step 1/2. Its function is as follows. Catalyzes the formation of 6,7-dimethyl-8-ribityllumazine by condensation of 5-amino-6-(D-ribitylamino)uracil with 3,4-dihydroxy-2-butanone 4-phosphate. This is the penultimate step in the biosynthesis of riboflavin. The sequence is that of 6,7-dimethyl-8-ribityllumazine synthase from Paramagnetospirillum magneticum (strain ATCC 700264 / AMB-1) (Magnetospirillum magneticum).